Consider the following 186-residue polypeptide: Large ribosomal subunit protein uL5 (186 aa).

It belongs to the universal ribosomal protein uL5 family. Part of the 50S ribosomal subunit; part of the 5S rRNA/L5/L18/L25 subcomplex. Contacts the 5S rRNA and the P site tRNA. Forms a bridge to the 30S subunit in the 70S ribosome.

This is one of the proteins that bind and probably mediate the attachment of the 5S RNA into the large ribosomal subunit, where it forms part of the central protuberance. In the 70S ribosome it contacts protein S13 of the 30S subunit (bridge B1b), connecting the 2 subunits; this bridge is implicated in subunit movement. Contacts the P site tRNA; the 5S rRNA and some of its associated proteins might help stabilize positioning of ribosome-bound tRNAs. The polypeptide is Large ribosomal subunit protein uL5 (Cereibacter sphaeroides (strain ATCC 17023 / DSM 158 / JCM 6121 / CCUG 31486 / LMG 2827 / NBRC 12203 / NCIMB 8253 / ATH 2.4.1.) (Rhodobacter sphaeroides)).